A 270-amino-acid chain; its full sequence is Phosphonoacetaldehyde hydrolase (270 aa).

Aspartate 11 serves as the catalytic Nucleophile. Mg(2+) is bound by residues aspartate 11 and alanine 13. The Schiff-base intermediate with substrate role is filled by lysine 53. Aspartate 187 provides a ligand contact to Mg(2+).

Belongs to the HAD-like hydrolase superfamily. PhnX family. In terms of assembly, homodimer. Mg(2+) is required as a cofactor.

The enzyme catalyses phosphonoacetaldehyde + H2O = acetaldehyde + phosphate + H(+). Its function is as follows. Involved in phosphonate degradation. This chain is Phosphonoacetaldehyde hydrolase, found in Salmonella choleraesuis (strain SC-B67).